The following is a 486-amino-acid chain: Malonate-semialdehyde dehydrogenase (486 aa).

NAD(+) is bound by residues phenylalanine 154, lysine 178, glutamate 181, arginine 182, and serine 231. The active-site Nucleophile is cysteine 286. Glutamate 386 provides a ligand contact to NAD(+).

It belongs to the aldehyde dehydrogenase family. IolA subfamily. As to quaternary structure, homotetramer.

The catalysed reaction is 3-oxopropanoate + NAD(+) + CoA + H2O = hydrogencarbonate + acetyl-CoA + NADH + H(+). The enzyme catalyses 2-methyl-3-oxopropanoate + NAD(+) + CoA + H2O = propanoyl-CoA + hydrogencarbonate + NADH + H(+). Its pathway is polyol metabolism; myo-inositol degradation into acetyl-CoA; acetyl-CoA from myo-inositol: step 7/7. Functionally, catalyzes the oxidation of malonate semialdehyde (MSA) and methylmalonate semialdehyde (MMSA) into acetyl-CoA and propanoyl-CoA, respectively. Is involved in a myo-inositol catabolic pathway. Bicarbonate, and not CO2, is the end-product of the enzymatic reaction. The polypeptide is Malonate-semialdehyde dehydrogenase (Bacillus cereus (strain AH187)).